The primary structure comprises 267 residues: GTP cyclohydrolase FolE2 2 (267 aa).

The protein belongs to the GTP cyclohydrolase IV family.

It catalyses the reaction GTP + H2O = 7,8-dihydroneopterin 3'-triphosphate + formate + H(+). It participates in cofactor biosynthesis; 7,8-dihydroneopterin triphosphate biosynthesis; 7,8-dihydroneopterin triphosphate from GTP: step 1/1. Functionally, converts GTP to 7,8-dihydroneopterin triphosphate. The polypeptide is GTP cyclohydrolase FolE2 2 (Cupriavidus metallidurans (strain ATCC 43123 / DSM 2839 / NBRC 102507 / CH34) (Ralstonia metallidurans)).